The primary structure comprises 130 residues: Profilin-12 (130 aa).

Residues Cys-13 and Cys-115 are joined by a disulfide bond. An Involved in PIP2 interaction motif is present at residues 81 to 97; that stretch reads AVIRGKKGSGGITVKKT. At Thr-111 the chain carries Phosphothreonine.

The protein belongs to the profilin family. As to quaternary structure, occurs in many kinds of cells as a complex with monomeric actin in a 1:1 ratio. Phosphorylated by MAP kinases.

It is found in the cytoplasm. It localises to the cytoskeleton. Functionally, binds to actin and affects the structure of the cytoskeleton. At high concentrations, profilin prevents the polymerization of actin, whereas it enhances it at low concentrations. This chain is Profilin-12, found in Zea mays (Maize).